Consider the following 282-residue polypeptide: Probable aquaporin PIP2-6 (282 aa).

Helical transmembrane passes span 39–59 and 76–96; these read ALIA…ATVI and LGIA…TAGI. Residues 102–104 carry the NPA 1 motif; it reads NPA. A run of 3 helical transmembrane segments spans residues 121–141, 163–183, and 197–217; these read VMYI…VKGI, GTAL…VFSA, and VLAP…TIPI. Residues 223–225 carry the NPA 2 motif; sequence NPA. A helical membrane pass occupies residues 245 to 265; sequence IFWAGPFIGALAAAAYHQYIL.

The protein belongs to the MIP/aquaporin (TC 1.A.8) family. PIP (TC 1.A.8.11) subfamily. Expressed in roots and leaves.

Its subcellular location is the cell membrane. In terms of biological role, aquaporins facilitate the transport of water and small neutral solutes across cell membranes. The chain is Probable aquaporin PIP2-6 (PIP2-6) from Oryza sativa subsp. japonica (Rice).